Reading from the N-terminus, the 338-residue chain is tRNA N6-adenosine threonylcarbamoyltransferase (338 aa).

The Fe cation site is built by histidine 111 and histidine 115. Residues 134–138 (LLSGG), aspartate 167, glycine 180, and asparagine 275 contribute to the substrate site. Aspartate 304 contributes to the Fe cation binding site.

The protein belongs to the KAE1 / TsaD family. The cofactor is Fe(2+).

The protein resides in the cytoplasm. The catalysed reaction is L-threonylcarbamoyladenylate + adenosine(37) in tRNA = N(6)-L-threonylcarbamoyladenosine(37) in tRNA + AMP + H(+). Required for the formation of a threonylcarbamoyl group on adenosine at position 37 (t(6)A37) in tRNAs that read codons beginning with adenine. Is involved in the transfer of the threonylcarbamoyl moiety of threonylcarbamoyl-AMP (TC-AMP) to the N6 group of A37, together with TsaE and TsaB. TsaD likely plays a direct catalytic role in this reaction. This Leptospira interrogans serogroup Icterohaemorrhagiae serovar copenhageni (strain Fiocruz L1-130) protein is tRNA N6-adenosine threonylcarbamoyltransferase.